The primary structure comprises 427 residues: Serine--tRNA ligase (427 aa).

L-serine is bound at residue Thr-231–Glu-233. Arg-262–Glu-264 contributes to the ATP binding site. Glu-285 lines the L-serine pocket. Residue Glu-349–Ser-352 participates in ATP binding. Ser-385 lines the L-serine pocket.

It belongs to the class-II aminoacyl-tRNA synthetase family. Type-1 seryl-tRNA synthetase subfamily. As to quaternary structure, homodimer. The tRNA molecule binds across the dimer.

It localises to the cytoplasm. The enzyme catalyses tRNA(Ser) + L-serine + ATP = L-seryl-tRNA(Ser) + AMP + diphosphate + H(+). It catalyses the reaction tRNA(Sec) + L-serine + ATP = L-seryl-tRNA(Sec) + AMP + diphosphate + H(+). It participates in aminoacyl-tRNA biosynthesis; selenocysteinyl-tRNA(Sec) biosynthesis; L-seryl-tRNA(Sec) from L-serine and tRNA(Sec): step 1/1. Catalyzes the attachment of serine to tRNA(Ser). Is also able to aminoacylate tRNA(Sec) with serine, to form the misacylated tRNA L-seryl-tRNA(Sec), which will be further converted into selenocysteinyl-tRNA(Sec). In Sinorhizobium medicae (strain WSM419) (Ensifer medicae), this protein is Serine--tRNA ligase.